We begin with the raw amino-acid sequence, 201 residues long: Recombination protein RecR (201 aa).

The segment at 60–75 (CSCCGNVDTIDPCTVC) adopts a C4-type zinc-finger fold. One can recognise a Toprim domain in the interval 83–178 (SVIIVVEDVA…KITRLAHGVP (96 aa)).

Belongs to the RecR family.

May play a role in DNA repair. It seems to be involved in an RecBC-independent recombinational process of DNA repair. It may act with RecF and RecO. The chain is Recombination protein RecR from Sinorhizobium fredii (strain NBRC 101917 / NGR234).